Reading from the N-terminus, the 568-residue chain is U6 small nuclear RNA (adenine-(43)-N(6))-methyltransferase (568 aa).

Residues 1 to 20 (MSEIDTNDIKKEMDNKNYRD) form a disordered region. Positions 7 to 20 (NDIKKEMDNKNYRD) are enriched in basic and acidic residues. S-adenosyl-L-methionine contacts are provided by Arg-117, Gly-151, Asp-175, and Asn-250. Disordered regions lie at residues 363 to 383 (KENN…INNN), 403 to 431 (NLDS…NNNN), and 503 to 538 (DPKI…NKNN). 3 stretches are compositionally biased toward low complexity: residues 365-383 (NNNI…INNN), 409-431 (NNNN…NNNN), and 507-538 (NNNN…NKNN).

It belongs to the methyltransferase superfamily. METTL16/RlmF family.

It carries out the reaction adenosine in U6 snRNA + S-adenosyl-L-methionine = N(6)-methyladenosine in U6 snRNA + S-adenosyl-L-homocysteine + H(+). Its function is as follows. RNA N6-methyltransferase that mediates N6-methylation of adenine of U6 small nuclear RNA (U6 snRNA). This is U6 small nuclear RNA (adenine-(43)-N(6))-methyltransferase from Dictyostelium discoideum (Social amoeba).